The sequence spans 252 residues: Ribosomal RNA small subunit methyltransferase J (252 aa).

S-adenosyl-L-methionine is bound by residues 104-105 (RD), 120-121 (ER), 156-157 (SS), and D174.

This sequence belongs to the methyltransferase superfamily. RsmJ family.

It is found in the cytoplasm. The catalysed reaction is guanosine(1516) in 16S rRNA + S-adenosyl-L-methionine = N(2)-methylguanosine(1516) in 16S rRNA + S-adenosyl-L-homocysteine + H(+). Specifically methylates the guanosine in position 1516 of 16S rRNA. The chain is Ribosomal RNA small subunit methyltransferase J from Yersinia enterocolitica serotype O:8 / biotype 1B (strain NCTC 13174 / 8081).